A 218-amino-acid chain; its full sequence is Thiamine-phosphate synthase (218 aa).

4-amino-2-methyl-5-(diphosphooxymethyl)pyrimidine is bound by residues 43–47 and asparagine 78; that span reads QFRDK. The Mg(2+) site is built by aspartate 79 and aspartate 98. Serine 117 is a 4-amino-2-methyl-5-(diphosphooxymethyl)pyrimidine binding site. 143–145 provides a ligand contact to 2-[(2R,5Z)-2-carboxy-4-methylthiazol-5(2H)-ylidene]ethyl phosphate; the sequence is TNS. Residue lysine 146 coordinates 4-amino-2-methyl-5-(diphosphooxymethyl)pyrimidine. 2-[(2R,5Z)-2-carboxy-4-methylthiazol-5(2H)-ylidene]ethyl phosphate-binding positions include glycine 174 and 194–195; that span reads IS.

The protein belongs to the thiamine-phosphate synthase family. Mg(2+) is required as a cofactor.

It carries out the reaction 2-[(2R,5Z)-2-carboxy-4-methylthiazol-5(2H)-ylidene]ethyl phosphate + 4-amino-2-methyl-5-(diphosphooxymethyl)pyrimidine + 2 H(+) = thiamine phosphate + CO2 + diphosphate. The enzyme catalyses 2-(2-carboxy-4-methylthiazol-5-yl)ethyl phosphate + 4-amino-2-methyl-5-(diphosphooxymethyl)pyrimidine + 2 H(+) = thiamine phosphate + CO2 + diphosphate. The catalysed reaction is 4-methyl-5-(2-phosphooxyethyl)-thiazole + 4-amino-2-methyl-5-(diphosphooxymethyl)pyrimidine + H(+) = thiamine phosphate + diphosphate. The protein operates within cofactor biosynthesis; thiamine diphosphate biosynthesis; thiamine phosphate from 4-amino-2-methyl-5-diphosphomethylpyrimidine and 4-methyl-5-(2-phosphoethyl)-thiazole: step 1/1. Functionally, condenses 4-methyl-5-(beta-hydroxyethyl)thiazole monophosphate (THZ-P) and 2-methyl-4-amino-5-hydroxymethyl pyrimidine pyrophosphate (HMP-PP) to form thiamine monophosphate (TMP). This Lactococcus lactis subsp. cremoris (strain SK11) protein is Thiamine-phosphate synthase.